The sequence spans 511 residues: Ribose import ATP-binding protein RbsA (511 aa).

2 consecutive ABC transporter domains span residues 7–242 (LQIS…VGRE) and 256–500 (CSTT…SGTQ). 39-46 (GENGAGKS) lines the ATP pocket.

Belongs to the ABC transporter superfamily. Ribose importer (TC 3.A.1.2.1) family. In terms of assembly, the complex is composed of an ATP-binding protein (RbsA), two transmembrane proteins (RbsC) and a solute-binding protein (RbsB).

It is found in the cell inner membrane. It catalyses the reaction D-ribose(out) + ATP + H2O = D-ribose(in) + ADP + phosphate + H(+). Functionally, part of the ABC transporter complex RbsABC involved in ribose import. Responsible for energy coupling to the transport system. The sequence is that of Ribose import ATP-binding protein RbsA from Ruegeria sp. (strain TM1040) (Silicibacter sp.).